Reading from the N-terminus, the 178-residue chain is Ribosome maturation factor RimM (178 aa).

In terms of domain architecture, PRC barrel spans 101–178 (DGEYYWYQLQ…EMKVEWDADF (78 aa)).

The protein belongs to the RimM family. In terms of assembly, binds ribosomal protein uS19.

The protein localises to the cytoplasm. Its function is as follows. An accessory protein needed during the final step in the assembly of 30S ribosomal subunit, possibly for assembly of the head region. Essential for efficient processing of 16S rRNA. May be needed both before and after RbfA during the maturation of 16S rRNA. It has affinity for free ribosomal 30S subunits but not for 70S ribosomes. This is Ribosome maturation factor RimM from Pseudomonas fluorescens (strain ATCC BAA-477 / NRRL B-23932 / Pf-5).